The primary structure comprises 82 residues: uncharacterized protein (82 aa).

This is an uncharacterized protein from Human herpesvirus 6A (strain Uganda-1102) (HHV-6 variant A).